The primary structure comprises 475 residues: MKYELVVGLEVHCQLNTTSKAFCGCSAKFGKSANTNVCPVCLALPGALPVLNRRVVEDAVKLGLATGCSIAPHSVLARKNYFYPDLPKGYQISQFEEPICSEGMVHIDAGEGNREIRLIRIHIEEDAGKSIHDIGEETYIDLNRSGVPLLEIVSYPDLRTSKEASAYLQKVRQIVKYLGISDGNMEEGSLRCDANVSLRPVGETEYGTRTEIKNMNSFKNVEKAIDYEVERHREILEAGGVILQETRLWDADKGETRSMRGKEFAHDYRYFPDPDLVPVLVDQEMIDRIMSELPEFPEERAVRFVDEYAIPAYDAAVLTVEREVADYFEESVRVSGDAKASSNWVMGEVMRVLKESYLDIAEFSILPERLGGLIALIGKGVISTTIAKQVFELMLKSGDAPAEIVEREGLAQVSDSGAIETVVQAILDANPGQLAAYRGGKTKLLGFFVGQCMSQMKGKANPQMVNEVLLRKLEG.

Belongs to the GatB/GatE family. GatB subfamily. In terms of assembly, heterotrimer of A, B and C subunits.

It carries out the reaction L-glutamyl-tRNA(Gln) + L-glutamine + ATP + H2O = L-glutaminyl-tRNA(Gln) + L-glutamate + ADP + phosphate + H(+). The enzyme catalyses L-aspartyl-tRNA(Asn) + L-glutamine + ATP + H2O = L-asparaginyl-tRNA(Asn) + L-glutamate + ADP + phosphate + 2 H(+). In terms of biological role, allows the formation of correctly charged Asn-tRNA(Asn) or Gln-tRNA(Gln) through the transamidation of misacylated Asp-tRNA(Asn) or Glu-tRNA(Gln) in organisms which lack either or both of asparaginyl-tRNA or glutaminyl-tRNA synthetases. The reaction takes place in the presence of glutamine and ATP through an activated phospho-Asp-tRNA(Asn) or phospho-Glu-tRNA(Gln). In Pelodictyon phaeoclathratiforme (strain DSM 5477 / BU-1), this protein is Aspartyl/glutamyl-tRNA(Asn/Gln) amidotransferase subunit B.